We begin with the raw amino-acid sequence, 500 residues long: Probable malate:quinone oxidoreductase (500 aa).

The protein belongs to the MQO family. It depends on FAD as a cofactor.

The catalysed reaction is (S)-malate + a quinone = a quinol + oxaloacetate. It participates in carbohydrate metabolism; tricarboxylic acid cycle; oxaloacetate from (S)-malate (quinone route): step 1/1. This Corynebacterium glutamicum (strain R) protein is Probable malate:quinone oxidoreductase.